A 370-amino-acid polypeptide reads, in one-letter code: tRNA 2-selenouridine synthase (370 aa).

A Rhodanese domain is found at 12–136 (FLDDVPMMDM…MRTFLLETTQ (125 aa)). Cys95 acts as the S-selanylcysteine intermediate in catalysis.

The protein belongs to the SelU family. Monomer.

The enzyme catalyses 5-methylaminomethyl-2-thiouridine(34) in tRNA + selenophosphate + (2E)-geranyl diphosphate + H2O + H(+) = 5-methylaminomethyl-2-selenouridine(34) in tRNA + (2E)-thiogeraniol + phosphate + diphosphate. It catalyses the reaction 5-methylaminomethyl-2-thiouridine(34) in tRNA + (2E)-geranyl diphosphate = 5-methylaminomethyl-S-(2E)-geranyl-thiouridine(34) in tRNA + diphosphate. It carries out the reaction 5-methylaminomethyl-S-(2E)-geranyl-thiouridine(34) in tRNA + selenophosphate + H(+) = 5-methylaminomethyl-2-(Se-phospho)selenouridine(34) in tRNA + (2E)-thiogeraniol. The catalysed reaction is 5-methylaminomethyl-2-(Se-phospho)selenouridine(34) in tRNA + H2O = 5-methylaminomethyl-2-selenouridine(34) in tRNA + phosphate. Its function is as follows. Involved in the post-transcriptional modification of the uridine at the wobble position (U34) of tRNA(Lys), tRNA(Glu) and tRNA(Gln). Catalyzes the conversion of 2-thiouridine (S2U-RNA) to 2-selenouridine (Se2U-RNA). Acts in a two-step process involving geranylation of 2-thiouridine (S2U) to S-geranyl-2-thiouridine (geS2U) and subsequent selenation of the latter derivative to 2-selenouridine (Se2U) in the tRNA chain. The sequence is that of tRNA 2-selenouridine synthase from Pseudomonas putida (strain ATCC 700007 / DSM 6899 / JCM 31910 / BCRC 17059 / LMG 24140 / F1).